Here is a 393-residue protein sequence, read N- to C-terminus: S-adenosylmethionine synthase (393 aa).

Residue H16 participates in ATP binding. D18 lines the Mg(2+) pocket. Residue E44 participates in K(+) binding. L-methionine is bound by residues E57 and Q100. Residues 100 to 110 (QSNDIAQGVDH) are flexible loop. ATP-binding positions include 167-169 (DAK), 238-239 (RF), D247, 253-254 (RK), A270, and K274. An L-methionine-binding site is contributed by D247. K278 provides a ligand contact to L-methionine.

It belongs to the AdoMet synthase family. As to quaternary structure, homotetramer; dimer of dimers. Requires Mg(2+) as cofactor. It depends on K(+) as a cofactor.

It localises to the cytoplasm. The catalysed reaction is L-methionine + ATP + H2O = S-adenosyl-L-methionine + phosphate + diphosphate. The protein operates within amino-acid biosynthesis; S-adenosyl-L-methionine biosynthesis; S-adenosyl-L-methionine from L-methionine: step 1/1. Catalyzes the formation of S-adenosylmethionine (AdoMet) from methionine and ATP. The overall synthetic reaction is composed of two sequential steps, AdoMet formation and the subsequent tripolyphosphate hydrolysis which occurs prior to release of AdoMet from the enzyme. This is S-adenosylmethionine synthase from Variovorax paradoxus (strain S110).